The following is a 202-amino-acid chain: Na(+)-translocating NADH-quinone reductase subunit E (202 aa).

The next 6 membrane-spanning stretches (helical) occupy residues 11–31 (SVFV…FLAI), 35–55 (IDAA…TVPV), 81–101 (FLGL…MEMV), 114–134 (GVFL…LLMV), 144–164 (VVFG…LAGI), and 182–202 (ITFI…GIAL).

This sequence belongs to the NqrDE/RnfAE family. As to quaternary structure, composed of six subunits; NqrA, NqrB, NqrC, NqrD, NqrE and NqrF.

The protein resides in the cell inner membrane. It catalyses the reaction a ubiquinone + n Na(+)(in) + NADH + H(+) = a ubiquinol + n Na(+)(out) + NAD(+). Its function is as follows. NQR complex catalyzes the reduction of ubiquinone-1 to ubiquinol by two successive reactions, coupled with the transport of Na(+) ions from the cytoplasm to the periplasm. NqrA to NqrE are probably involved in the second step, the conversion of ubisemiquinone to ubiquinol. In Saccharophagus degradans (strain 2-40 / ATCC 43961 / DSM 17024), this protein is Na(+)-translocating NADH-quinone reductase subunit E.